The sequence spans 668 residues: Golgin subfamily A member 6-like protein 1 (668 aa).

Disordered regions lie at residues 1 to 120 (MLMW…HQEA), 323 to 356 (IREQEEKIREQEEKMRRQEEMMWEKEEKMRRQEE), 384 to 466 (EKMH…EMWR), 481 to 591 (KEKM…REQE), and 603 to 639 (EQEEMMQEQEEKMWEQEEKMCEQEEKMQEQEEKMRRQ). The span at 15 to 41 (LPTHPHLPTHPHLPTHPHLPTHPHLPT) shows a compositional bias: basic residues. Residues 51–72 (MSKETRQSKLAEAKEQLTDHHP) show a composition bias toward basic and acidic residues. Polar residues-rich tracts occupy residues 73 to 83 (QTNPSVGTAAS) and 91 to 103 (NNGTNPETTTSGG). Positions 106–120 (SPEDEQKASHQHQEA) are enriched in basic and acidic residues. A coiled-coil region spans residues 177–663 (LEQALSAVAT…EEKMQEHQEH (487 aa)).

Belongs to the GOLGA6 family.

The protein is Golgin subfamily A member 6-like protein 1 (GOLGA6L1) of Homo sapiens (Human).